The following is a 636-amino-acid chain: Chaperone protein HtpG (636 aa).

The interval 1–342 (MSSETLEFQA…AHDLSLNISR (342 aa)) is a; substrate-binding. A b region spans residues 343 to 558 (ELLQQDRQIQ…AHDVTPTLEK (216 aa)). The c stretch occupies residues 559 to 636 (MYRAMGHEVP…ILAERLARTL (78 aa)).

It belongs to the heat shock protein 90 family. Homodimer.

It localises to the cytoplasm. In terms of biological role, molecular chaperone. Has ATPase activity. The chain is Chaperone protein HtpG from Salinispora tropica (strain ATCC BAA-916 / DSM 44818 / JCM 13857 / NBRC 105044 / CNB-440).